The primary structure comprises 658 residues: L-type lectin-domain containing receptor kinase V.4 (658 aa).

Residues 1–25 (MSRTIGSRVIFLILALFCCTENSRG) form the signal peptide. Positions 26 to 248 (KLVMQGSAGF…RAMHYMLSWF (223 aa)) are legume-lectin like. Over 26-280 (KLVMQGSAGF…EKSLVYRIVL (255 aa)) the chain is Extracellular. Asparagine 66 and asparagine 196 each carry an N-linked (GlcNAc...) asparagine glycan. The chain crosses the membrane as a helical span at residues 281–301 (VTSLALVLFVALVASALSIFF). At 302–658 (YRRHKKVKEV…LTEPFTSRGR (357 aa)) the chain is on the cytoplasmic side. The 259-residue stretch at 334 to 592 (KGFKQLLGKG…LGVLCSHQAV (259 aa)) folds into the Protein kinase domain. ATP contacts are provided by residues 340 to 348 (LGKGGFGQV) and lysine 363. Aspartate 460 (proton acceptor) is an active-site residue.

It in the C-terminal section; belongs to the protein kinase superfamily. Ser/Thr protein kinase family. This sequence in the N-terminal section; belongs to the leguminous lectin family.

It is found in the cell membrane. The enzyme catalyses L-seryl-[protein] + ATP = O-phospho-L-seryl-[protein] + ADP + H(+). It carries out the reaction L-threonyl-[protein] + ATP = O-phospho-L-threonyl-[protein] + ADP + H(+). Its function is as follows. Involved in resistance response to the pathogenic oomycetes Phytophthora infestans and Phytophthora capsici and to the pathogenic bacteria Pseudomonas syringae. The chain is L-type lectin-domain containing receptor kinase V.4 from Arabidopsis thaliana (Mouse-ear cress).